Consider the following 485-residue polypeptide: Probable phosphomannomutase (485 aa).

The Phosphoserine intermediate role is filled by serine 86. Residues serine 86, aspartate 236, aspartate 238, and aspartate 240 each contribute to the Mg(2+) site.

The protein belongs to the phosphohexose mutase family. Mg(2+) serves as cofactor.

It carries out the reaction alpha-D-mannose 1-phosphate = D-mannose 6-phosphate. The chain is Probable phosphomannomutase from Haemophilus influenzae (strain ATCC 51907 / DSM 11121 / KW20 / Rd).